A 223-amino-acid chain; its full sequence is Superoxide dismutase [Mn], mitochondrial (223 aa).

Residues 1-24 (MNLIIGVAGRLLVGKNYCLNTQRL) constitute a mitochondrion transit peptide. 4 residues coordinate Mn(2+): His-50, His-98, Asp-184, and His-188.

Belongs to the iron/manganese superoxide dismutase family. In terms of assembly, homotetramer. Requires Mn(2+) as cofactor.

Its subcellular location is the mitochondrion matrix. The enzyme catalyses 2 superoxide + 2 H(+) = H2O2 + O2. Destroys superoxide anion radicals which are normally produced within the cells and which are toxic to biological systems. This is Superoxide dismutase [Mn], mitochondrial (sod-2) from Onchocerca volvulus.